A 404-amino-acid chain; its full sequence is Tripartite motif-containing 13 (404 aa).

Residues 10–56 (CPICCCLFEDPRVLPCSHSFCKKCLEGILDGNRSPTWRPPFKCPTCR) form an RING-type zinc finger. A B box-type zinc finger spans residues 87-129 (PRMSQCRVHSGQPLNIFCATDLKLICGFCATTGDHKGHKFCAL). C92, H95, C115, and H121 together coordinate Zn(2+). A helical transmembrane segment spans residues 102-119 (IFCATDLKLICGFCATTG). The stretch at 186 to 236 (KLLRTLEHKRSEILSDLETLKLAVMQTFDPEINRLRSALEEQRRALNIAES) forms a coiled coil.

Its subcellular location is the endoplasmic reticulum membrane. It functions in the pathway protein modification; protein ubiquitination. Its function is as follows. E3 ubiquitin ligase involved in the retrotranslocation and turnover of membrane and secretory proteins from the ER through a set of processes named ER-associated degradation (ERAD). This process acts on misfolded proteins as well as in the regulated degradation of correctly folded proteins. The protein is Tripartite motif-containing 13 (trim13) of Danio rerio (Zebrafish).